The chain runs to 1251 residues: Probable transcription factor TDA9 (1251 aa).

C2H2-type zinc fingers lie at residues 61 to 83 (FLCH…QRAH) and 89 to 112 (FLCV…HKLH). Disordered regions lie at residues 160–227 (VQLK…KSKR) and 398–428 (NHSH…IEKS). The segment covering 164–173 (KAAKEKKNGK) has biased composition (basic residues). A compositionally biased stretch (polar residues) spans 183 to 202 (YGANNHSTDVSPSVGNSSTP). A compositionally biased stretch (low complexity) spans 407 to 428 (NNSSSGINYSNNKNNNESIEKS). Phosphoserine occurs at positions 527 and 603. A compositionally biased stretch (low complexity) spans 617-634 (SLTPSLTTQTATTQSGPG). The disordered stretch occupies residues 617-636 (SLTPSLTTQTATTQSGPGWT).

It belongs to the RSF2/TDA9 family.

Its subcellular location is the nucleus. In terms of biological role, DNA-binding protein that acts probably as a transcription factor. The protein is Probable transcription factor TDA9 (TDA9) of Saccharomyces cerevisiae (strain ATCC 204508 / S288c) (Baker's yeast).